We begin with the raw amino-acid sequence, 153 residues long: uncharacterized protein (153 aa).

It is found in the mitochondrion. This is an uncharacterized protein from Arabidopsis thaliana (Mouse-ear cress).